The following is an 80-amino-acid chain: Exodeoxyribonuclease 7 small subunit (80 aa).

Belongs to the XseB family. As to quaternary structure, heterooligomer composed of large and small subunits.

The protein resides in the cytoplasm. The enzyme catalyses Exonucleolytic cleavage in either 5'- to 3'- or 3'- to 5'-direction to yield nucleoside 5'-phosphates.. In terms of biological role, bidirectionally degrades single-stranded DNA into large acid-insoluble oligonucleotides, which are then degraded further into small acid-soluble oligonucleotides. The polypeptide is Exodeoxyribonuclease 7 small subunit (Rickettsia bellii (strain OSU 85-389)).